The sequence spans 114 residues: Large ribosomal subunit protein bL20 (114 aa).

Belongs to the bacterial ribosomal protein bL20 family.

Its function is as follows. Binds directly to 23S ribosomal RNA and is necessary for the in vitro assembly process of the 50S ribosomal subunit. It is not involved in the protein synthesizing functions of that subunit. The protein is Large ribosomal subunit protein bL20 of Anaeromyxobacter dehalogenans (strain 2CP-1 / ATCC BAA-258).